Reading from the N-terminus, the 130-residue chain is Calcium-binding protein KRP1 (130 aa).

In terms of domain architecture, EF-hand spans 72–107; sequence LTDEDVRCMIKEGDFDCDGALNQMEFCVLMFRLSPD. The Ca(2+) site is built by Asp-85, Asp-87, Asp-89, and Glu-96.

Potential calcium sensor that binds calcium in vitro. This Arabidopsis thaliana (Mouse-ear cress) protein is Calcium-binding protein KRP1.